Here is a 769-residue protein sequence, read N- to C-terminus: 5-methyltetrahydropteroyltriglutamate--homocysteine methyltransferase (769 aa).

5-methyltetrahydropteroyltri-L-glutamate is bound by residues 18 to 21 (RELK) and lysine 127. L-homocysteine is bound by residues 447–449 (IGS) and glutamate 500. Residues 447 to 449 (IGS) and glutamate 500 contribute to the L-methionine site. 5-methyltetrahydropteroyltri-L-glutamate is bound by residues 531 to 532 (RC) and tryptophan 577. Aspartate 615 serves as a coordination point for L-homocysteine. Residue aspartate 615 coordinates L-methionine. 5-methyltetrahydropteroyltri-L-glutamate is bound at residue glutamate 621. Residues histidine 657, cysteine 659, and glutamate 681 each coordinate Zn(2+). Histidine 710 serves as the catalytic Proton donor. Zn(2+) is bound at residue cysteine 742.

Belongs to the vitamin-B12 independent methionine synthase family. Zn(2+) serves as cofactor.

The enzyme catalyses 5-methyltetrahydropteroyltri-L-glutamate + L-homocysteine = tetrahydropteroyltri-L-glutamate + L-methionine. Its pathway is amino-acid biosynthesis; L-methionine biosynthesis via de novo pathway; L-methionine from L-homocysteine (MetE route): step 1/1. Functionally, catalyzes the transfer of a methyl group from 5-methyltetrahydrofolate to homocysteine resulting in methionine formation. This chain is 5-methyltetrahydropteroyltriglutamate--homocysteine methyltransferase, found in Chelativorans sp. (strain BNC1).